Consider the following 80-residue polypeptide: Conotoxin ArMKLT2-0321 (80 aa).

A signal peptide spans 1-21 (MKLTCVLIIAMLFLIVCQLNT). The propeptide occupies 22–48 (ADDSTDKQEYRAVKLRDAMRNFKGSKR). Intrachain disulfides connect C50–C63, C57–C68, and C62–C77.

The protein belongs to the conotoxin O1 superfamily. As to expression, expressed by the venom duct.

It localises to the secreted. The protein is Conotoxin ArMKLT2-0321 of Conus arenatus (Sand-dusted cone).